Consider the following 937-residue polypeptide: Bifunctional glutamine synthetase adenylyltransferase/adenylyl-removing enzyme (937 aa).

An adenylyl removase region spans residues 1–436 (MSQPIPSASP…AAEFAELLAP (436 aa)). The tract at residues 443–937 (PDTLADYWRA…QLRFQPGKGA (495 aa)) is adenylyl transferase.

The protein belongs to the GlnE family. Mg(2+) serves as cofactor.

It catalyses the reaction [glutamine synthetase]-O(4)-(5'-adenylyl)-L-tyrosine + phosphate = [glutamine synthetase]-L-tyrosine + ADP. The enzyme catalyses [glutamine synthetase]-L-tyrosine + ATP = [glutamine synthetase]-O(4)-(5'-adenylyl)-L-tyrosine + diphosphate. Involved in the regulation of glutamine synthetase GlnA, a key enzyme in the process to assimilate ammonia. When cellular nitrogen levels are high, the C-terminal adenylyl transferase (AT) inactivates GlnA by covalent transfer of an adenylyl group from ATP to specific tyrosine residue of GlnA, thus reducing its activity. Conversely, when nitrogen levels are low, the N-terminal adenylyl removase (AR) activates GlnA by removing the adenylyl group by phosphorolysis, increasing its activity. The regulatory region of GlnE binds the signal transduction protein PII (GlnB) which indicates the nitrogen status of the cell. This chain is Bifunctional glutamine synthetase adenylyltransferase/adenylyl-removing enzyme, found in Xanthomonas campestris pv. campestris (strain ATCC 33913 / DSM 3586 / NCPPB 528 / LMG 568 / P 25).